The sequence spans 270 residues: Interleukin-1 beta (270 aa).

A propeptide spanning residues 1 to 118 (MARVPEPTSE…KCDDNAFVHD (118 aa)) is cleaved from the precursor.

The protein belongs to the IL-1 family. Monomer. In its precursor form, weakly interacts with full-length MEFV; the mature cytokine does not interact at all. Interacts with integrins ITGAV:ITGBV and ITGA5:ITGB1; integrin-binding is required for IL1B signaling. Interacts with cargo receptor TMED10; the interaction is direct and is required for the secretion of IL1B mature form. Interacts with HSP90AB1; the interaction facilitates cargo translocation into the ERGIC. Interacts with HSP90B1; the interaction facilitates cargo translocation into the ERGIC.

It is found in the cytoplasm. The protein resides in the cytosol. The protein localises to the secreted. Its subcellular location is the lysosome. It localises to the extracellular exosome. Functionally, potent pro-inflammatory cytokine. Initially discovered as the major endogenous pyrogen, induces prostaglandin synthesis, neutrophil influx and activation, T-cell activation and cytokine production, B-cell activation and antibody production, and fibroblast proliferation and collagen production. Promotes Th17 differentiation of T-cells. Synergizes with IL12/interleukin-12 to induce IFNG synthesis from T-helper 1 (Th1) cells. Plays a role in angiogenesis by inducing VEGF production synergistically with TNF and IL6. Involved in transduction of inflammation downstream of pyroptosis: its mature form is specifically released in the extracellular milieu by passing through the gasdermin-D (GSDMD) pore. The protein is Interleukin-1 beta (IL1B) of Mustela putorius furo (European domestic ferret).